We begin with the raw amino-acid sequence, 322 residues long: Probable heme-iron transport system permease protein IsdF (322 aa).

9 consecutive transmembrane segments (helical) span residues 9–29 (LLFL…FVTG), 61–81 (ILIA…LQAA), 89–109 (ANII…MLFI), 114–134 (FYLP…IILL), 143–163 (VSMI…LEIL), 179–199 (IWSD…LTLL), 233–253 (VFLA…GIIV), 267–287 (VLIP…DLLG), and 294–314 (LEIP…IYLI).

It belongs to the binding-protein-dependent transport system permease family. FecCD subfamily.

The protein resides in the cell membrane. In terms of biological role, part of the binding-protein-dependent transport system for heme-iron. Responsible for the translocation of the substrate across the membrane. The chain is Probable heme-iron transport system permease protein IsdF (isdF) from Staphylococcus aureus (strain Mu3 / ATCC 700698).